The following is a 366-amino-acid chain: Alanine racemase (366 aa).

Lys-40 (proton acceptor; specific for D-alanine) is an active-site residue. The residue at position 40 (Lys-40) is an N6-(pyridoxal phosphate)lysine. Residue Arg-136 participates in substrate binding. Tyr-263 serves as the catalytic Proton acceptor; specific for L-alanine. Met-310 is a substrate binding site.

Belongs to the alanine racemase family. Requires pyridoxal 5'-phosphate as cofactor.

It catalyses the reaction L-alanine = D-alanine. Its pathway is amino-acid biosynthesis; D-alanine biosynthesis; D-alanine from L-alanine: step 1/1. Its function is as follows. Catalyzes the interconversion of L-alanine and D-alanine. May also act on other amino acids. The chain is Alanine racemase (alr) from Streptococcus pyogenes serotype M6 (strain ATCC BAA-946 / MGAS10394).